Reading from the N-terminus, the 59-residue chain is Potassium channel toxin alpha-KTx 15.2 (59 aa).

A signal peptide spans Met-1–Cys-22. Gln-23 is modified (pyrrolidone carboxylic acid). Disulfide bonds link Cys-30/Cys-50, Cys-35/Cys-55, and Cys-39/Cys-57.

This sequence belongs to the short scorpion toxin superfamily. Potassium channel inhibitor family. Alpha-KTx 15 subfamily. In terms of tissue distribution, expressed by the venom gland.

It localises to the secreted. Blocks both human ERG1/Kv11.1/KCNH2 potassium channels (in a reversible manner) and A-type voltage-gated potassium channels Kv4/KCND (in an irreversible manner). The presence of the Kv4-associated proteins DPP6 or DPP10 is mandatory to have high-affinity blockade of Kv4.2/KCND2 and Kv4.3/KCND3 channels. In contrast, the presence of the Kv4-associated protein KChIP1/KCNIP1 does not enhance the affinity blockade. May dispose of two functional faces (A and B); the two basic residues (Arg-40 and Lys-41) on the alpha-helix side of the peptide that blocks the hERG current (face A) and the typical dyad through which it blocks A-type currents on the beta-sheet side (face B). In adult rat brain, it binds to sites in the striatum, hippocampus, superior colliculus, and cerebellum. It shares the same target in rat brain than AaTX1 (AC Q867F4) and AmmTX3 (AC P60208). In DPP6 knockout mice, A-type currents are much less affected by the toxin than in wild-type mice. This Olivierus martensii (Manchurian scorpion) protein is Potassium channel toxin alpha-KTx 15.2.